Here is a 171-residue protein sequence, read N- to C-terminus: Co-chaperone protein HscB homolog (171 aa).

Residues 2–69 (NHFELFDLPV…DSRAAYLLSL (68 aa)) enclose the J domain.

Belongs to the HscB family. In terms of assembly, interacts with HscA and stimulates its ATPase activity.

Its function is as follows. Co-chaperone involved in the maturation of iron-sulfur cluster-containing proteins. Seems to help targeting proteins to be folded toward HscA. The chain is Co-chaperone protein HscB homolog from Acinetobacter baylyi (strain ATCC 33305 / BD413 / ADP1).